We begin with the raw amino-acid sequence, 66 residues long: Large ribosomal subunit protein bL33c (66 aa).

The protein belongs to the bacterial ribosomal protein bL33 family.

Its subcellular location is the plastid. The protein localises to the chloroplast. This Coffea arabica (Arabian coffee) protein is Large ribosomal subunit protein bL33c.